A 343-amino-acid chain; its full sequence is Ribosomal RNA small subunit methyltransferase C (343 aa).

It belongs to the methyltransferase superfamily. RsmC family. As to quaternary structure, monomer.

Its subcellular location is the cytoplasm. It catalyses the reaction guanosine(1207) in 16S rRNA + S-adenosyl-L-methionine = N(2)-methylguanosine(1207) in 16S rRNA + S-adenosyl-L-homocysteine + H(+). In terms of biological role, specifically methylates the guanine in position 1207 of 16S rRNA in the 30S particle. This is Ribosomal RNA small subunit methyltransferase C from Escherichia coli (strain ATCC 8739 / DSM 1576 / NBRC 3972 / NCIMB 8545 / WDCM 00012 / Crooks).